We begin with the raw amino-acid sequence, 308 residues long: Glucan 1,3-beta-glucosidase ARB_02797 (308 aa).

Residues 1–20 form the signal peptide; the sequence is MRFSTALSLALAVSPAAVFA. Residue Glu120 is the Proton donor of the active site. Asn126 is a glycosylation site (N-linked (GlcNAc...) asparagine). Glu220 functions as the Nucleophile in the catalytic mechanism.

It belongs to the glycosyl hydrolase 17 family.

Its subcellular location is the secreted. The protein resides in the cell wall. It localises to the cytoplasm. The enzyme catalyses Successive hydrolysis of beta-D-glucose units from the non-reducing ends of (1-&gt;3)-beta-D-glucans, releasing alpha-glucose.. In terms of biological role, cell wall glucan 1,3-beta-glucosidase involved in cell wall biosynthesis and virulence. Crucial for delivery of beta-1,3-glucan to the biofilm matrix and for accumulation of mature matrix biomass. The protein is Glucan 1,3-beta-glucosidase ARB_02797 of Arthroderma benhamiae (strain ATCC MYA-4681 / CBS 112371) (Trichophyton mentagrophytes).